The following is a 92-amino-acid chain: Muconolactone Delta-isomerase (92 aa).

This sequence belongs to the muconolactone Delta-isomerase family. Homodecamer.

The catalysed reaction is (S)-muconolactone = (4,5-dihydro-5-oxofuran-2-yl)-acetate. It functions in the pathway aromatic compound metabolism; beta-ketoadipate pathway; 5-oxo-4,5-dihydro-2-furylacetate from catechol: step 3/3. This Cupriavidus pinatubonensis (strain JMP 134 / LMG 1197) (Cupriavidus necator (strain JMP 134)) protein is Muconolactone Delta-isomerase (catC).